We begin with the raw amino-acid sequence, 252 residues long: Transcriptional regulatory protein HptR (252 aa).

Residues 3-118 (KVVICDDERI…QLEVILGRLV (116 aa)) enclose the Response regulatory domain. Aspartate 55 bears the 4-aspartylphosphate mark. One can recognise an HTH araC/xylS-type domain in the interval 153–250 (NQIVDQIKQS…QMAPSDYCKQ (98 aa)). 2 DNA-binding regions (H-T-H motif) span residues 170–191 (SDLI…KDHV) and 217–240 (HYEI…KKYL).

Post-translationally, phosphorylated by HptS.

The protein resides in the cytoplasm. In terms of biological role, member of the two-component regulatory system HptS/HptR that regulates genes involved in hexose phosphate transport system in response to changes in extracellular phosphate sources. Activates uhpT expression to facilitate glucose-6-phosphate/G6P utilization by directly binding to its promoter. Antagonizes CcpA-dependent transcription of a subset of CcpA-regulated genes involved in antibiotic susceptibility. The chain is Transcriptional regulatory protein HptR (hptR) from Staphylococcus aureus (strain bovine RF122 / ET3-1).